We begin with the raw amino-acid sequence, 387 residues long: Protein FAM153B (387 aa).

Disordered stretches follow at residues 233-256 (SYNGEEEDPEEVKTSLGVPQRGDL) and 327-374 (TITG…KKSR). Positions 336–345 (SASPSSAPAE) are enriched in low complexity. Residues 347-359 (ATEKTKVEEEVKT) are compositionally biased toward basic and acidic residues. Over residues 360–374 (RKPKKKTRKPSKKSR) the composition is skewed to basic residues.

It belongs to the FAM153 family.

The protein is Protein FAM153B (FAM153B) of Homo sapiens (Human).